Reading from the N-terminus, the 394-residue chain is Flagellin A (394 aa).

It belongs to the bacterial flagellin family.

The protein resides in the secreted. It is found in the bacterial flagellum. Functionally, flagellin is the subunit protein which polymerizes to form the filaments of bacterial flagella. Homomer of FlaA is able to form a functional filament. The sequence is that of Flagellin A (flaA) from Rhizobium meliloti (strain 1021) (Ensifer meliloti).